The primary structure comprises 81 residues: Mu/omega-theraphotoxin-Hs1a (81 aa).

An N-terminal signal peptide occupies residues 1–21 (MRASMFLALAGLVLLFVVCYA). A propeptide spanning residues 22 to 48 (SESEEKEFPRELLFKFFAVDDFKGEER) is cleaved from the precursor. 3 disulfides stabilise this stretch: Cys50-Cys65, Cys57-Cys70, and Cys64-Cys77.

The protein belongs to the neurotoxin 10 (Hwtx-1) family. 23 (HwTx-I) subfamily. Expressed by the venom gland.

It is found in the secreted. Lethal toxin with multiple biological activities. Inhibits voltage-gated TTX-sensitive sodium channels in DRG neurons (IC(50)=55 nM) and also shows activity when directly tested on Nav1.7/SCN9A (IC(50)=25.1-630 nM). Inhibits N-type calcium channels (Cav2.2/CACNA1B (IC(50)=100 nM)). Also blocks neuromuscular transmission. In vivo, intrathecal injected toxin shows analgesic activity in the rat formalin-induced pain model, without induction of motor dysfunction in rats. The polypeptide is Mu/omega-theraphotoxin-Hs1a (Cyriopagopus schmidti (Chinese bird spider)).